A 545-amino-acid polypeptide reads, in one-letter code: Glutamine-dependent NAD(+) synthetase (545 aa).

The 243-residue stretch at 5 to 247 (LRIAMAQFDF…DQWLVVDYMR (243 aa)) folds into the CN hydrolase domain. E46 functions as the Proton acceptor; for glutaminase activity in the catalytic mechanism. The active-site For glutaminase activity is K113. An L-glutamine-binding site is contributed by Y119. Residue C151 is the Nucleophile; for glutaminase activity of the active site. The L-glutamine site is built by S177 and K183. The ligase stretch occupies residues 269–545 (VWRAVVRGVQ…RYPISNAYRG (277 aa)). An ATP-binding site is contributed by 292-299 (GLSGGIDS). N375 serves as a coordination point for deamido-NAD(+). Residue T399 coordinates ATP. 2 residues coordinate deamido-NAD(+): E404 and K516.

The protein in the C-terminal section; belongs to the NAD synthetase family.

The enzyme catalyses deamido-NAD(+) + L-glutamine + ATP + H2O = L-glutamate + AMP + diphosphate + NAD(+) + H(+). It participates in cofactor biosynthesis; NAD(+) biosynthesis; NAD(+) from deamido-NAD(+) (L-Gln route): step 1/1. Its function is as follows. Catalyzes the ATP-dependent amidation of deamido-NAD to form NAD. Uses L-glutamine as a nitrogen source. The chain is Glutamine-dependent NAD(+) synthetase from Xylella fastidiosa (strain 9a5c).